Here is a 777-residue protein sequence, read N- to C-terminus: Hepatocyte growth factor-regulated tyrosine kinase substrate (777 aa).

Residues 15-143 (ATSQLLLETD…IMKVEGHVFP (129 aa)) enclose the VHS domain. The FYVE-type zinc-finger motif lies at 160 to 220 (WVDAEECHRC…VCEPCFEQLN (61 aa)). Zn(2+) contacts are provided by Cys166, Cys169, Cys182, Cys185, Cys190, and Cys193. Position 207 is an N6-acetyllysine (Lys207). Positions 212 and 215 each coordinate Zn(2+). The interval 223–319 (AEGKAASTTE…SPVNSSAPLA (97 aa)) is disordered. An interaction with SNX1 region spans residues 225–541 (GKAASTTELP…QRLQEQEKER (317 aa)). In terms of domain architecture, UIM spans 258 to 277 (QEEEELQLALALSQSEAEEK). The span at 292 to 311 (AEPTPVASSAPPASSLYSSP) shows a compositional bias: low complexity. Phosphotyrosine is present on residues Tyr308, Tyr329, and Tyr334. The segment at 338 to 370 (KQEEARKSPTPSAPVPLTEPTAQPGEGHAIPAN) is disordered. The segment at 443 to 541 (SINTMHPQLL…QRLQEQEKER (99 aa)) is interaction with SNAP25 and TRAK2. An interaction with STAM region spans residues 452–570 (LELLNQLDER…FSLPYAQLQA (119 aa)). Residues 478-777 (ARGALSALRE…GSEAQLISFD (300 aa)) are interaction with NF2. Lys549 is modified (N6-succinyllysine). Residues 645–658 (AAAQGPAGPTTSPA) are compositionally biased toward low complexity. 2 disordered regions span residues 645–698 (AAAQ…YMGS) and 712–777 (NLMP…ISFD). Polar residues-rich tracts occupy residues 659-698 (YSSY…YMGS) and 730-739 (PYISGQQPVY). Residues 753 to 777 (PPVAQQPPAQGPPAQGSEAQLISFD) are compositionally biased toward low complexity.

Component of the ESCRT-0 complex composed of STAM or STAM2 and HGS. Part of a complex at least composed of HSG, STAM2 (or probably STAM) and EPS15. Interacts with STAM. Interacts with STAM2. Interacts with EPS15; the interaction is direct, calcium-dependent and inhibited by SNAP25. Identified in a complex with STAM and LITAF. Found in a complex with STAM and E3 ligase ITCH and DTX3L. Interacts with E3 ligase DTX3L; the interaction brings together STAM and HSG, promotes their recruitment to early endosomes and decreases STAM and HGS ubiquitination by ITCH. Interacts with NF2; the interaction is direct. Interacts with ubiquitin; the interaction is direct. Interacts with VPS37C. Interacts with SMAD1, SMAD2 and SMAD3. Interacts with TSG101; the interaction mediates the association with the ESCRT-I complex. Interacts with SNAP25; the interaction is direct and decreases with addition of increasing concentrations of free calcium. Interacts with SNX1; the interaction is direct. Component of a 550 kDa membrane complex at least composed of HGS and SNX1 but excluding EGFR. Interacts with TRAK1. Interacts with TRAK2. Component of the CART complex, at least composed of ACTN4, HGS/HRS, MYO5B and TRIM3. Interacts (via UIM domain) with UBQLN1 (via ubiquitin-like domain). Interacts with ARRDC3. Identified in a complex containing at least ARRDC4, AVPR2 and HGS. Interacts with LAPTM4B; promotes HGS ubiquitination. In terms of processing, phosphorylated on Tyr-334. A minor site of phosphorylation on Tyr-329 is detected. Phosphorylation occurs in response to EGF, IL-2, GM-CSF and HGF. Ubiquitinated by ITCH.

Its subcellular location is the cytoplasm. It localises to the early endosome membrane. The protein localises to the endosome. It is found in the multivesicular body membrane. In terms of biological role, involved in intracellular signal transduction mediated by cytokines and growth factors. When associated with STAM it suppresses DNA signaling upon stimulation by IL-2 and GM-CSF. Could be a direct effector of PI3-kinase in vesicular pathway via early endosomes and may regulate trafficking to early and late endosomes by recruiting clathrin. May concentrate ubiquitinated receptors within clathrin-coated regions. Involved in down-regulation of receptor tyrosine kinase via multivesicular body (MVBs) when complexed with STAM (ESCRT-0 complex). The ESCRT-0 complex binds ubiquitin and acts as a sorting machinery that recognizes ubiquitinated receptors and transfers them to further sequential lysosomal sorting/trafficking processes. May contribute to the efficient recruitment of SMADs to the activin receptor complex. Involved in receptor recycling via its association with the CART complex, a multiprotein complex required for efficient transferrin receptor recycling but not for EGFR degradation. The protein is Hepatocyte growth factor-regulated tyrosine kinase substrate (HGS) of Bos taurus (Bovine).